We begin with the raw amino-acid sequence, 419 residues long: UDP-N-acetylglucosamine 1-carboxyvinyltransferase (419 aa).

Phosphoenolpyruvate is bound at residue 22-23 (KN). Arginine 93 contacts UDP-N-acetyl-alpha-D-glucosamine. Cysteine 117 functions as the Proton donor in the catalytic mechanism. Position 117 is a 2-(S-cysteinyl)pyruvic acid O-phosphothioketal (cysteine 117). UDP-N-acetyl-alpha-D-glucosamine-binding residues include aspartate 307 and isoleucine 329.

This sequence belongs to the EPSP synthase family. MurA subfamily.

The protein resides in the cytoplasm. It carries out the reaction phosphoenolpyruvate + UDP-N-acetyl-alpha-D-glucosamine = UDP-N-acetyl-3-O-(1-carboxyvinyl)-alpha-D-glucosamine + phosphate. It participates in cell wall biogenesis; peptidoglycan biosynthesis. Its function is as follows. Cell wall formation. Adds enolpyruvyl to UDP-N-acetylglucosamine. This Shewanella sp. (strain MR-7) protein is UDP-N-acetylglucosamine 1-carboxyvinyltransferase.